A 425-amino-acid chain; its full sequence is L-lysine N6-monooxygenase (425 aa).

Ile8 to Pro14 contacts FAD.

Belongs to the lysine N(6)-hydroxylase/L-ornithine N(5)-oxygenase family. FAD is required as a cofactor.

It localises to the cytoplasm. Its subcellular location is the cell membrane. It carries out the reaction L-lysine + NADPH + O2 = N(6)-hydroxy-L-lysine + NADP(+) + H2O. The protein operates within siderophore biosynthesis; aerobactin biosynthesis. Flavoprotein monooxygenase required for N-hydroxylation of lysine. Involved in the biosynthesis of the siderophore aerobactin which is a chelator that mediates the high-affinity iron transport systems induced by the organism under iron-stressed conditions. This is L-lysine N6-monooxygenase from Escherichia coli.